The primary structure comprises 77 residues: Large ribosomal subunit protein uL29 (77 aa).

Belongs to the universal ribosomal protein uL29 family.

This chain is Large ribosomal subunit protein uL29, found in Mycolicibacterium smegmatis (strain ATCC 700084 / mc(2)155) (Mycobacterium smegmatis).